The following is a 393-amino-acid chain: Formate-dependent phosphoribosylglycinamide formyltransferase (393 aa).

N(1)-(5-phospho-beta-D-ribosyl)glycinamide is bound by residues 22–23 (EL) and glutamate 82. ATP is bound by residues arginine 114, lysine 155, 160–165 (SSGKGQ), 195–198 (EGLV), and glutamate 203. Positions 119-308 (LLAAETLQLP…EFALHVRAFL (190 aa)) constitute an ATP-grasp domain. Mg(2+)-binding residues include glutamate 267 and glutamate 279. N(1)-(5-phospho-beta-D-ribosyl)glycinamide is bound by residues aspartate 286, lysine 355, and 362-363 (RR).

The protein belongs to the PurK/PurT family. As to quaternary structure, homodimer.

It catalyses the reaction N(1)-(5-phospho-beta-D-ribosyl)glycinamide + formate + ATP = N(2)-formyl-N(1)-(5-phospho-beta-D-ribosyl)glycinamide + ADP + phosphate + H(+). The protein operates within purine metabolism; IMP biosynthesis via de novo pathway; N(2)-formyl-N(1)-(5-phospho-D-ribosyl)glycinamide from N(1)-(5-phospho-D-ribosyl)glycinamide (formate route): step 1/1. In terms of biological role, involved in the de novo purine biosynthesis. Catalyzes the transfer of formate to 5-phospho-ribosyl-glycinamide (GAR), producing 5-phospho-ribosyl-N-formylglycinamide (FGAR). Formate is provided by PurU via hydrolysis of 10-formyl-tetrahydrofolate. The polypeptide is Formate-dependent phosphoribosylglycinamide formyltransferase (Yersinia enterocolitica serotype O:8 / biotype 1B (strain NCTC 13174 / 8081)).